The sequence spans 494 residues: Aspartyl/glutamyl-tRNA(Asn/Gln) amidotransferase subunit B (494 aa).

It belongs to the GatB/GatE family. GatB subfamily. Heterotrimer of A, B and C subunits.

It carries out the reaction L-glutamyl-tRNA(Gln) + L-glutamine + ATP + H2O = L-glutaminyl-tRNA(Gln) + L-glutamate + ADP + phosphate + H(+). It catalyses the reaction L-aspartyl-tRNA(Asn) + L-glutamine + ATP + H2O = L-asparaginyl-tRNA(Asn) + L-glutamate + ADP + phosphate + 2 H(+). Functionally, allows the formation of correctly charged Asn-tRNA(Asn) or Gln-tRNA(Gln) through the transamidation of misacylated Asp-tRNA(Asn) or Glu-tRNA(Gln) in organisms which lack either or both of asparaginyl-tRNA or glutaminyl-tRNA synthetases. The reaction takes place in the presence of glutamine and ATP through an activated phospho-Asp-tRNA(Asn) or phospho-Glu-tRNA(Gln). The protein is Aspartyl/glutamyl-tRNA(Asn/Gln) amidotransferase subunit B of Rhodopseudomonas palustris (strain BisB5).